The chain runs to 426 residues: Isovaleryl-CoA dehydrogenase, mitochondrial (426 aa).

A mitochondrion-targeting transit peptide spans 1–32 (MATAAWLLGRRVASWRMRPPLQSLAGLITQRT). K58 and K78 each carry N6-acetyllysine; alternate. Residues K58 and K78 each carry the N6-succinyllysine; alternate modification. Residues 165 to 174 (LAMSEPNAGS) and 198 to 200 (WIT) each bind FAD. S174 lines the substrate pocket. A substrate-binding site is contributed by 222-223 (SR). An N6-acetyllysine modification is found at K241. Substrate is bound by residues Y277 and 284-287 (DLER). E286 serves as the catalytic Proton acceptor. R312 lines the FAD pocket. Residue K318 is modified to N6-succinyllysine. Residues Q323 and 380 to 384 (QCLGG) each bind FAD. 407 to 408 (AG) contacts substrate. 409-411 (TSE) lines the FAD pocket.

The protein belongs to the acyl-CoA dehydrogenase family. Homotetramer. It depends on FAD as a cofactor.

The protein resides in the mitochondrion matrix. It catalyses the reaction 3-methylbutanoyl-CoA + oxidized [electron-transfer flavoprotein] + H(+) = 3-methylbut-2-enoyl-CoA + reduced [electron-transfer flavoprotein]. It carries out the reaction pentanoyl-CoA + oxidized [electron-transfer flavoprotein] + H(+) = (2E)-pentenoyl-CoA + reduced [electron-transfer flavoprotein]. The enzyme catalyses hexanoyl-CoA + oxidized [electron-transfer flavoprotein] + H(+) = (2E)-hexenoyl-CoA + reduced [electron-transfer flavoprotein]. The catalysed reaction is butanoyl-CoA + oxidized [electron-transfer flavoprotein] + H(+) = (2E)-butenoyl-CoA + reduced [electron-transfer flavoprotein]. The protein operates within amino-acid degradation; L-leucine degradation; (S)-3-hydroxy-3-methylglutaryl-CoA from 3-isovaleryl-CoA: step 1/3. Its function is as follows. Catalyzes the conversion of isovaleryl-CoA/3-methylbutanoyl-CoA to 3-methylbut-2-enoyl-CoA as an intermediate step in the leucine (Leu) catabolic pathway. To a lesser extent, is also able to catalyze the oxidation of other saturated short-chain acyl-CoA thioesters as pentanoyl-CoA, hexenoyl-CoA and butenoyl-CoA. In Bos taurus (Bovine), this protein is Isovaleryl-CoA dehydrogenase, mitochondrial (IVD).